Reading from the N-terminus, the 393-residue chain is Dual specificity mitogen-activated protein kinase kinase 1 (393 aa).

The interval 1 to 27 (MPKKKPTPIQLNPAPDGSAVNGTSSAE) is disordered. Residues 68–361 (FEKISELGAG…LKQLMVHAFI (294 aa)) form the Protein kinase domain. ATP is bound by residues 74–82 (LGAGNGGVV) and Lys97. Asp190 functions as the Proton acceptor in the catalytic mechanism. Residues Ser218 and Ser222 each carry the phosphoserine; by RAF modification. The interval 270–307 (ELELMFGCQVEGDAAETPPRPRTPGRPLSSYGMDSRPP) is RAF1-binding. At Thr286 the chain carries Phosphothreonine. Phosphothreonine; by MAPK1 is present on Thr292. A Phosphoserine; by PAK modification is found at Ser298.

It belongs to the protein kinase superfamily. STE Ser/Thr protein kinase family. MAP kinase kinase subfamily. In terms of assembly, found in a complex with at least BRAF, HRAS, MAP2K1, MAPK3/ERK1 and RGS14. Forms a heterodimer with MAP2K2/MEK2. Forms heterodimers with KSR2 which further dimerize to form tetramers. Interacts with KSR1 or KSR2 and BRAF; the interaction with KSR1 or KSR2 mediates KSR1-BRAF or KSR2-BRAF dimerization. Interacts with ARBB2, LAMTOR3, MAPK1/ERK2 and RAF1. Interacts with MAPK1/ERK2. Interacts with MORG1. Interacts with PPARG. Interacts with SGK1. Interacts with BIRC6/bruce. Interacts with KAT7; the interaction promotes KAT7 phosphorylation. Interacts with RAF1 and NEK10; the interaction is required for ERK1/2-signaling pathway activation in response to UV irradiation. Interacts with TRAF3IP3. Interacts with MOS. Phosphorylation at Ser-218 and Ser-222 by MAP kinase kinase kinases (RAF or MEKK1) positively regulates the kinase activity. Also phosphorylated at Thr-292 by MAPK1/ERK2 and at Ser-298 by PAK. MAPK1/ERK2 phosphorylation of Thr-292 occurs in response to cellular adhesion and leads to inhibition of Ser-298 phosphorylation by PAK. Autophosphorylated at Ser-218 and Ser-222, autophosphosphorylation is promoted by NEK10 following UV irradiation.

It localises to the cytoplasm. It is found in the cytoskeleton. The protein localises to the microtubule organizing center. The protein resides in the centrosome. Its subcellular location is the spindle pole body. It localises to the nucleus. It is found in the membrane. It carries out the reaction L-seryl-[protein] + ATP = O-phospho-L-seryl-[protein] + ADP + H(+). The catalysed reaction is L-threonyl-[protein] + ATP = O-phospho-L-threonyl-[protein] + ADP + H(+). The enzyme catalyses L-tyrosyl-[protein] + ATP = O-phospho-L-tyrosyl-[protein] + ADP + H(+). With respect to regulation, ras proteins such as HRAS mediate the activation of RAF proteins such as RAF1 or BRAF which in turn activate extracellular signal-regulated kinases (ERK) through MAPK (mitogen-activated protein kinases) and ERK kinases MAP2K1/MEK1 and MAP2K2/MEK2. Activation occurs through phosphorylation of Ser-218 and Ser-222. MAP2K1/MEK1 binds KSR1 or KSR2 releasing the inhibitory intramolecular interaction between KSR1 or KSR2 protein kinase and N-terminal domains. This allows KSR1 or KSR2 dimerization with BRAF leading to BRAF activation and phosphorylation of MAP2K1. MAP2K1/MEK1 is also the target of negative feed-back regulation by its substrate kinases, such as MAPK1/ERK2. These phosphorylate MAP2K1/MEK1 on Thr-292, thereby facilitating dephosphorylation of the activating residues Ser-218 and Ser-222. Inhibited by serine/threonine phosphatase 2A. Dual specificity protein kinase which acts as an essential component of the MAP kinase signal transduction pathway. Binding of extracellular ligands such as growth factors, cytokines and hormones to their cell-surface receptors activates RAS and this initiates RAF1 activation. RAF1 then further activates the dual-specificity protein kinases MAP2K1/MEK1 and MAP2K2/MEK2. Both MAP2K1/MEK1 and MAP2K2/MEK2 function specifically in the MAPK/ERK cascade, and catalyze the concomitant phosphorylation of a threonine and a tyrosine residue in a Thr-Glu-Tyr sequence located in the extracellular signal-regulated kinases MAPK3/ERK1 and MAPK1/ERK2, leading to their activation and further transduction of the signal within the MAPK/ERK cascade. Activates BRAF in a KSR1 or KSR2-dependent manner; by binding to KSR1 or KSR2 releases the inhibitory intramolecular interaction between KSR1 or KSR2 protein kinase and N-terminal domains which promotes KSR1 or KSR2-BRAF dimerization and BRAF activation. Depending on the cellular context, this pathway mediates diverse biological functions such as cell growth, adhesion, survival and differentiation, predominantly through the regulation of transcription, metabolism and cytoskeletal rearrangements. One target of the MAPK/ERK cascade is peroxisome proliferator-activated receptor gamma (PPARG), a nuclear receptor that promotes differentiation and apoptosis. MAP2K1/MEK1 has been shown to export PPARG from the nucleus. The MAPK/ERK cascade is also involved in the regulation of endosomal dynamics, including lysosome processing and endosome cycling through the perinuclear recycling compartment (PNRC), as well as in the fragmentation of the Golgi apparatus during mitosis. This Oryctolagus cuniculus (Rabbit) protein is Dual specificity mitogen-activated protein kinase kinase 1 (MAP2K1).